Consider the following 151-residue polypeptide: Small ribosomal subunit protein uS11 (151 aa).

A disordered region spans residues Asp-131–Leu-151. Over residues Arg-142–Leu-151 the composition is skewed to basic residues.

This sequence belongs to the universal ribosomal protein uS11 family.

The protein is Small ribosomal subunit protein uS11 of Bombyx mori (Silk moth).